The primary structure comprises 70 residues: Large ribosomal subunit protein uL29 (70 aa).

Belongs to the universal ribosomal protein uL29 family.

This is Large ribosomal subunit protein uL29 from Clostridium novyi (strain NT).